The chain runs to 345 residues: BAG family molecular chaperone regulator 1 (345 aa).

Residues 1 to 137 (MAQRGGARRP…STRSEEVTRE (137 aa)) are disordered. Positions 68–80 (RRPRMKKKTRRRS) are enriched in basic residues. Residues 81-91 (TRSEELTRSEE) are compositionally biased toward basic and acidic residues. Residues 95-114 (SEEATWSEEATQSEEATQGE) are compositionally biased toward low complexity. 7 consecutive repeat copies span residues 96–101 (EEATWS), 102–107 (EEATQS), 108–113 (EEATQG), 114–119 (EEMNRS), 120–125 (QEVTRD), 126–131 (EESTRS), and 132–137 (EEVTRE). Residues 96 to 137 (EEATWSEEATQSEEATQGEEMNRSQEVTRDEESTRSEEVTRE) form a 7 X 6 AA tandem repeat of E-E-X(4) region. Positions 115-137 (EMNRSQEVTRDEESTRSEEVTRE) are enriched in basic and acidic residues. Residues 144 to 224 (LTVTVTHSNE…VMLIGKKNSP (81 aa)) enclose the Ubiquitin-like domain. The tract at residues 172–219 (DLAQVVEEVIGVPQSFQKLIFKGKSLKEMETPLSALGIQDGCRVMLIG) is interaction with HSPA8. Positions 216–345 (MLIGKKNSPQ…LQSTNFALAE (130 aa)) are interaction with PPP1R15A. Position 223 is a phosphoserine (serine 223). Positions 246–326 (QLEELNKELT…AFLAECDTVE (81 aa)) constitute a BAG domain.

In terms of assembly, homodimer. Forms a heteromeric complex with HSP70/HSC70. Binds to the ATPase domain of HSP/HSC70 chaperones. Isoform 1, isoform 3 and isoform 4 but not isoform 2 interact with HSPA8/HSC70. Interacts with NR3C1. Interacts with the N-terminal region of MAPRE2. Interacts with PPP1R15A. Interacts with BCL2 in an ATP-dependent manner. Isoform 2 does not interact with BCL2. Interacts with SIAH1. Interacts with HSPA8 (via NBD). Interacts with HSPA1A (via NBD) and HSPA1B (via NBD). Interacts with SIAH2. Interacts with ESR1; the interaction is promoted in the absence of estradiol (17-beta-estradiol/E2). Ubiquitinated; mediated by SIAH1 or SIAH2 and leading to its subsequent proteasomal degradation. Isoform 4 is the most abundantly expressed isoform. It is ubiquitously expressed throughout most tissues, except the liver, colon, breast and uterine myometrium. Isoform 1 is expressed in the ovary and testis. Isoform 4 is expressed in several types of tumor cell lines, and at consistently high levels in leukemia and lymphoma cell lines. Isoform 1 is expressed in the prostate, breast and leukemia cell lines. Isoform 3 is the least abundant isoform in tumor cell lines (at protein level).

Its subcellular location is the nucleus. It localises to the cytoplasm. Functionally, co-chaperone for HSP70 and HSC70 chaperone proteins. Acts as a nucleotide-exchange factor (NEF) promoting the release of ADP from the HSP70 and HSC70 proteins thereby triggering client/substrate protein release. Nucleotide release is mediated via its binding to the nucleotide-binding domain (NBD) of HSPA8/HSC70 where as the substrate release is mediated via its binding to the substrate-binding domain (SBD) of HSPA8/HSC70. Inhibits the pro-apoptotic function of PPP1R15A, and has anti-apoptotic activity. Markedly increases the anti-cell death function of BCL2 induced by various stimuli. Involved in the STUB1-mediated proteasomal degradation of ESR1 in response to age-related circulating estradiol (17-beta-estradiol/E2) decline, thereby promotes neuronal apoptosis in response to ischemic reperfusion injury. The protein is BAG family molecular chaperone regulator 1 (BAG1) of Homo sapiens (Human).